Consider the following 211-residue polypeptide: MLTAIRKNGLTLAIFACATTGLVALTQYLTEDQIKLQEQKQLLSVLNQVIPETMHDNALTQSCTLVTSPELGTMHAMPTYIATKNGEPTAIAIESIAPDGYNGEIKVITGIDNQGKILGTRVLSHQETPGLGDKIDLRVTSWILGFTGKQVTEDNWNSWKVRKDGGDFDQFTGATITPRAVIKAVRNTVNYVNQSRDEILSQPLNCAGDNQ.

The helical transmembrane segment at 9-29 (GLTLAIFACATTGLVALTQYL) threads the bilayer. At Thr-175 the chain carries FMN phosphoryl threonine.

This sequence belongs to the RnfG family. In terms of assembly, the complex is composed of six subunits: RnfA, RnfB, RnfC, RnfD, RnfE and RnfG. FMN is required as a cofactor.

The protein resides in the cell inner membrane. Part of a membrane-bound complex that couples electron transfer with translocation of ions across the membrane. This chain is Ion-translocating oxidoreductase complex subunit G, found in Vibrio parahaemolyticus serotype O3:K6 (strain RIMD 2210633).